Here is a 314-residue protein sequence, read N- to C-terminus: Probable serine/threonine-protein kinase WNK11 (314 aa).

The segment at 1–22 (MMTCASSDDNESEKDKDSESFV) is disordered. The region spanning 31–289 (GRYGELLGSG…AAELLCDPFF (259 aa)) is the Protein kinase domain. An ATP-binding site is contributed by 111–114 (TEIC). The active-site Proton acceptor is the Asp-178. Positions 295–314 (DDDEDGENNDNNGAGRIVVS) are disordered.

It belongs to the protein kinase superfamily. Ser/Thr protein kinase family. WNK subfamily.

The enzyme catalyses L-seryl-[protein] + ATP = O-phospho-L-seryl-[protein] + ADP + H(+). The catalysed reaction is L-threonyl-[protein] + ATP = O-phospho-L-threonyl-[protein] + ADP + H(+). May regulate flowering time by modulating the photoperiod pathway. The polypeptide is Probable serine/threonine-protein kinase WNK11 (WNK11) (Arabidopsis thaliana (Mouse-ear cress)).